The chain runs to 179 residues: Large ribosomal subunit protein uL6 (179 aa).

It belongs to the universal ribosomal protein uL6 family. Part of the 50S ribosomal subunit.

In terms of biological role, this protein binds to the 23S rRNA, and is important in its secondary structure. It is located near the subunit interface in the base of the L7/L12 stalk, and near the tRNA binding site of the peptidyltransferase center. In Leptospira interrogans serogroup Icterohaemorrhagiae serovar copenhageni (strain Fiocruz L1-130), this protein is Large ribosomal subunit protein uL6.